The primary structure comprises 191 residues: Large ribosomal subunit protein uL6 (191 aa).

Belongs to the universal ribosomal protein uL6 family. In terms of assembly, component of the large ribosomal subunit. Mature ribosomes consist of a small (40S) and a large (60S) subunit. The 40S subunit contains about 32 different proteins and 1 molecule of RNA (18S). The 60S subunit contains 45 different proteins and 3 molecules of RNA (25S, 5.8S and 5S).

It localises to the cytoplasm. In terms of biological role, component of the ribosome, a large ribonucleoprotein complex responsible for the synthesis of proteins in the cell. The small ribosomal subunit (SSU) binds messenger RNAs (mRNAs) and translates the encoded message by selecting cognate aminoacyl-transfer RNA (tRNA) molecules. The large subunit (LSU) contains the ribosomal catalytic site termed the peptidyl transferase center (PTC), which catalyzes the formation of peptide bonds, thereby polymerizing the amino acids delivered by tRNAs into a polypeptide chain. The nascent polypeptides leave the ribosome through a tunnel in the LSU and interact with protein factors that function in enzymatic processing, targeting, and the membrane insertion of nascent chains at the exit of the ribosomal tunnel. This Candida albicans (strain SC5314 / ATCC MYA-2876) (Yeast) protein is Large ribosomal subunit protein uL6.